The sequence spans 30 residues: Snaclec coagulation factor IX/factor X-binding protein subunit A (30 aa).

A C-type lectin domain is found at 1–30 (DCPSDWSPYEGHCYKHFIKWMNNEDAERFC). A disulfide bridge connects residues Cys-2 and Cys-13.

This sequence belongs to the snaclec family. In terms of assembly, heterodimer of subunits A and B; disulfide-linked. As to expression, expressed by the venom gland.

Its subcellular location is the secreted. Its function is as follows. Anticoagulant protein which binds to the gamma-carboxyglutamic acid-domain regions of factors IX (F9) and factor X (F10) in the presence of calcium with a 1 to 1 stoichiometry. In Bothrops jararaca (Jararaca), this protein is Snaclec coagulation factor IX/factor X-binding protein subunit A.